The following is a 466-amino-acid chain: Asparagine--tRNA ligase (466 aa).

This sequence belongs to the class-II aminoacyl-tRNA synthetase family. Homodimer.

It is found in the cytoplasm. The catalysed reaction is tRNA(Asn) + L-asparagine + ATP = L-asparaginyl-tRNA(Asn) + AMP + diphosphate + H(+). This is Asparagine--tRNA ligase from Escherichia coli O139:H28 (strain E24377A / ETEC).